Reading from the N-terminus, the 231-residue chain is MHIFEGFLPGPWWQIWWILSIPVFAYGIFRLNKLVKEKPEVLPLIAVSGAVIFVLSSLKLPSVTGSTSHPTGTGMAVILFGPAITSVLSAIVLLYQALFLAHGGITTFGANLMSMGIIGPFVAYAIYKTMMRLNVNFYVSAFVTATLADWVTYVVTSTQLALAFPANPGGVEGSLVAFLSVFAITQIPLAILEASLITLLFKYVLQAKGDLMVRLDVLTDSQVRKLKETKA.

6 helical membrane-spanning segments follow: residues 9 to 29 (PGPW…YGIF), 41 to 61 (VLPL…LKLP), 74 to 94 (GMAV…IVLL), 107 to 127 (TFGA…YAIY), 135 to 155 (VNFY…TYVV), and 181 to 201 (VFAI…TLLF).

The protein belongs to the CbiM family. As to quaternary structure, forms an energy-coupling factor (ECF) transporter complex composed of an ATP-binding protein (A component, CbiO), a transmembrane protein (T component, CbiQ) and 2 possible substrate-capture proteins (S components, CbiM and CbiN) of unknown stoichimetry.

The protein localises to the cell membrane. Its pathway is cofactor biosynthesis; adenosylcobalamin biosynthesis. Part of the energy-coupling factor (ECF) transporter complex CbiMNOQ involved in cobalt import. This chain is Putative cobalt transport protein CbiM 1, found in Methanosarcina barkeri (strain Fusaro / DSM 804).